Reading from the N-terminus, the 257-residue chain is Isoprenyl transferase (257 aa).

D33 is a catalytic residue. Residue D33 participates in Mg(2+) binding. Substrate-binding positions include G34 to R37, W38, R46, H50, and S78 to E80. N81 functions as the Proton acceptor in the catalytic mechanism. Residues W82, R84, R204, and R210 to S212 each bind substrate. E223 is a Mg(2+) binding site.

Belongs to the UPP synthase family. Homodimer. It depends on Mg(2+) as a cofactor.

Its function is as follows. Catalyzes the condensation of isopentenyl diphosphate (IPP) with allylic pyrophosphates generating different type of terpenoids. This chain is Isoprenyl transferase, found in Clostridium acetobutylicum (strain ATCC 824 / DSM 792 / JCM 1419 / IAM 19013 / LMG 5710 / NBRC 13948 / NRRL B-527 / VKM B-1787 / 2291 / W).